We begin with the raw amino-acid sequence, 265 residues long: GTP cyclohydrolase FolE2 (265 aa).

Belongs to the GTP cyclohydrolase IV family.

The enzyme catalyses GTP + H2O = 7,8-dihydroneopterin 3'-triphosphate + formate + H(+). The protein operates within cofactor biosynthesis; 7,8-dihydroneopterin triphosphate biosynthesis; 7,8-dihydroneopterin triphosphate from GTP: step 1/1. In terms of biological role, converts GTP to 7,8-dihydroneopterin triphosphate. The protein is GTP cyclohydrolase FolE2 of Magnetococcus marinus (strain ATCC BAA-1437 / JCM 17883 / MC-1).